Consider the following 394-residue polypeptide: Trans-enoyl reductase fumoC (394 aa).

62-65 (VDGK) serves as a coordination point for NADP(+). 152–159 (ASLASVGM) is a binding site for substrate. NADP(+) contacts are provided by residues 224-227 (SSSS), Y242, and 289-290 (LD). 309–313 (TLTQF) contacts substrate. Position 378–379 (378–379 (VK)) interacts with NADP(+).

It belongs to the zinc-containing alcohol dehydrogenase family. In terms of assembly, monomer.

Its pathway is secondary metabolite biosynthesis. Trans-enoyl reductase; part of the gene cluster that mediates the biosynthesis of fumosorinone, a 2-pyridone alkaloid that acts as an inhibitor of protein tyrosine phosphatase 1B which is implicated asa negative regulator of insulin receptor signaling and a potential drug target for the treatment of type II diabetes and other associated metabolic syndromes. The polyketide-amino acid backbone of fumosorinone is first assembled by the PKS-NRPS hybrid fumoS. The PKS modules condense one acetyl-CoA starter unit with 7 malonyl-CoA units, programmed C-methylations occurring after the first 3 and the sixth extensions, and cycles of full reduction occurring after the first 2 extensions. Because fumoS lacks a designated enoyl reductase (ER) domain, the required activity is provided the enoyl reductase fumoC. Upon formation of the polyketide backbone on the thiotemplate, the polyketide is transferred to the NRPS module and linked to tyrosine to produce the acyltetramic acid intermediate called prefumosorinone A. The cytochrome P450 monooxygenase fumoA then probably catalyzes an unprecedented oxidative ring expansion of prefumosorinone A to form prefumosorinone B which contains the 2-pyridone core of fumosorinone. The cytochrome P450 monooxygenase fumoB might hydroxylate the nitrogen of prefumosorinone B, but not the acyltetramic acid prefumosorinone A, to form fumosorinone. In Cordyceps fumosorosea (strain ARSEF 2679) (Isaria fumosorosea), this protein is Trans-enoyl reductase fumoC.